Here is a 328-residue protein sequence, read N- to C-terminus: Glycerophosphodiester phosphodiesterase GDPD4 (328 aa).

A helical membrane pass occupies residues 35 to 55 (TILFAVIFLAIFPPLYFHFKL). In terms of domain architecture, GP-PDE spans 73–312 (PLVCAHGGDS…SDPSMFQGLM (240 aa)).

It belongs to the glycerophosphoryl diester phosphodiesterase family. Expressed in rosette and cauline leaves.

The protein resides in the membrane. It catalyses the reaction a sn-glycero-3-phosphodiester + H2O = an alcohol + sn-glycerol 3-phosphate + H(+). In Arabidopsis thaliana (Mouse-ear cress), this protein is Glycerophosphodiester phosphodiesterase GDPD4.